The following is a 247-amino-acid chain: Probable transcriptional regulatory protein Tola_2714 (247 aa).

The segment at 1 to 21 (MAGHSKWANIKHRKAAQDAKR) is disordered.

This sequence belongs to the TACO1 family.

It localises to the cytoplasm. In Tolumonas auensis (strain DSM 9187 / NBRC 110442 / TA 4), this protein is Probable transcriptional regulatory protein Tola_2714.